The following is a 115-amino-acid chain: Ribosome-binding factor A (115 aa).

This sequence belongs to the RbfA family. In terms of assembly, monomer. Binds 30S ribosomal subunits, but not 50S ribosomal subunits or 70S ribosomes.

The protein resides in the cytoplasm. Functionally, one of several proteins that assist in the late maturation steps of the functional core of the 30S ribosomal subunit. Associates with free 30S ribosomal subunits (but not with 30S subunits that are part of 70S ribosomes or polysomes). Required for efficient processing of 16S rRNA. May interact with the 5'-terminal helix region of 16S rRNA. This Staphylococcus carnosus (strain TM300) protein is Ribosome-binding factor A.